We begin with the raw amino-acid sequence, 837 residues long: Protein translocase subunit SecA 1 (837 aa).

Residues Gln85, 103–107 (GEGKT), and Asp492 contribute to the ATP site. Basic and acidic residues predominate over residues 787–806 (QEVAKGEAVHPKEDGEEPKR). Residues 787 to 811 (QEVAKGEAVHPKEDGEEPKRKPVRK) form a disordered region. Cys821, Cys823, Cys832, and Cys833 together coordinate Zn(2+).

This sequence belongs to the SecA family. In terms of assembly, monomer and homodimer. Part of the essential Sec protein translocation apparatus which comprises SecA, SecYEG and auxiliary proteins SecDF. Other proteins may also be involved. It depends on Zn(2+) as a cofactor.

The protein localises to the cell membrane. It localises to the cytoplasm. The enzyme catalyses ATP + H2O + cellular proteinSide 1 = ADP + phosphate + cellular proteinSide 2.. Part of the Sec protein translocase complex. Interacts with the SecYEG preprotein conducting channel. Has a central role in coupling the hydrolysis of ATP to the transfer of proteins into and across the cell membrane, serving as an ATP-driven molecular motor driving the stepwise translocation of polypeptide chains across the membrane. This Geobacillus kaustophilus (strain HTA426) protein is Protein translocase subunit SecA 1.